Reading from the N-terminus, the 404-residue chain is Cysteine desulfurase IscS (404 aa).

Pyridoxal 5'-phosphate-binding positions include 85-86 (GT), N165, Q193, 213-215 (SGH), and T251. The active-site Cysteine persulfide intermediate is C338. Residue C338 coordinates [2Fe-2S] cluster.

This sequence belongs to the class-V pyridoxal-phosphate-dependent aminotransferase family. NifS/IscS subfamily. As to quaternary structure, homodimer. Forms a heterotetramer with IscU, interacts with other sulfur acceptors. Pyridoxal 5'-phosphate serves as cofactor.

The protein resides in the cytoplasm. It carries out the reaction (sulfur carrier)-H + L-cysteine = (sulfur carrier)-SH + L-alanine. The protein operates within cofactor biosynthesis; iron-sulfur cluster biosynthesis. In terms of biological role, master enzyme that delivers sulfur to a number of partners involved in Fe-S cluster assembly, tRNA modification or cofactor biosynthesis. Catalyzes the removal of elemental sulfur atoms from cysteine to produce alanine. Functions as a sulfur delivery protein for Fe-S cluster synthesis onto IscU, an Fe-S scaffold assembly protein, as well as other S acceptor proteins. The polypeptide is Cysteine desulfurase IscS (Methanosarcina thermophila).